A 379-amino-acid polypeptide reads, in one-letter code: Histone-lysine N-methyltransferase ATXR5 (379 aa).

Positions 1-15 (MATWNASSPAASPCS) are enriched in low complexity. Residues 1–42 (MATWNASSPAASPCSSRRRTKAPARRPSSESPPPRKMKSMAE) are disordered. A chloroplast-targeting transit peptide spans 1-44 (MATWNASSPAASPCSSRRRTKAPARRPSSESPPPRKMKSMAEIM). The segment at 64–114 (NVTCEKCGSGEGDDELLLCDKCDRGFHMKCLRPIVVRVPIGTWLCVDCSDQ) adopts a PHD-type zinc-finger fold. Residues 122 to 129 (QKKILHFF) carry the PIP motif motif. Residue Met221 coordinates substrate. One can recognise an SET domain in the interval 245-367 (PPLVVVFDPL…KGERLYYDYN (123 aa)). Residues 255–257 (EGY) and 317–321 (RFING) each bind S-adenosyl-L-methionine. Arg339 contacts substrate. Tyr366 serves as a coordination point for S-adenosyl-L-methionine. 369-370 (YE) lines the substrate pocket. Position 373 (Tyr373) interacts with S-adenosyl-L-methionine.

It belongs to the class V-like SAM-binding methyltransferase superfamily. Histone-lysine methyltransferase family. TRX/MLL subfamily. Isoform 1 but not isoform 2 interacts with PCNA1 and PCNA2. Interacts (via PHD domain) with HTR1 (via N-terminus). Isoform 2 interacts with IPS1. Expressed in leaves, roots, stems, flowers, siliques and developing pollen. Up-regulated in tissues where cell division is active.

Its subcellular location is the nucleus. The protein resides in the plastid. The protein localises to the chloroplast. It carries out the reaction L-lysyl(27)-[histone H3] + S-adenosyl-L-methionine = N(6)-methyl-L-lysyl(27)-[histone H3] + S-adenosyl-L-homocysteine + H(+). Histone methyltransferase that specifically monomethylates 'Lys-27' of histone H3 (H3K27me1). Has much higher activity on nucleosomes containing H3.1 than H3.3. Involved in the formation of constitutive heterochromatin and the silencing of heterochromatic elements. Influences which sets of rRNA gene variants are expressed or silenced. The chain is Histone-lysine N-methyltransferase ATXR5 (ATXR5) from Arabidopsis thaliana (Mouse-ear cress).